Reading from the N-terminus, the 143-residue chain is Synuclein (143 aa).

A run of 3 repeats spans residues 20-30, 31-41, and 42-52. Residues 20-78 are 5 X 11 AA tandem repeats of [EGST]-K-T-K-[EQ]-[GQ]-[VA]-X(4); it reads EKTKQGVQDAAEKTKQGVQDAAEKTKEGVMYVGTKTKEGVVQSVNTVTEKTKEQANVVG. The 4; approximate repeat unit spans residues 53–67; that stretch reads TKTKEGVVQSVNTVT. Repeat 5 spans residues 68-78; sequence EKTKEQANVVG. Positions 113 to 143 are disordered; that stretch reads REIPAEQVAEGKQTTQEPLVEATEATEETGK.

Belongs to the synuclein family. Nervous system tissue. Found in the electric lobe, the brain and the spinal cord.

The protein resides in the nucleus. Functionally, may have a role in synaptic regulation or signal transduction. This Tetronarce californica (Pacific electric ray) protein is Synuclein.